We begin with the raw amino-acid sequence, 110 residues long: Large ribosomal subunit protein uL22 (110 aa).

Over residues 85 to 95 (RGTASKIRKPT) the composition is skewed to basic residues. Residues 85 to 110 (RGTASKIRKPTSHVMVEVSKAQKKEA) form a disordered region.

Belongs to the universal ribosomal protein uL22 family. As to quaternary structure, part of the 50S ribosomal subunit.

Its function is as follows. This protein binds specifically to 23S rRNA; its binding is stimulated by other ribosomal proteins, e.g. L4, L17, and L20. It is important during the early stages of 50S assembly. It makes multiple contacts with different domains of the 23S rRNA in the assembled 50S subunit and ribosome. The globular domain of the protein is located near the polypeptide exit tunnel on the outside of the subunit, while an extended beta-hairpin is found that lines the wall of the exit tunnel in the center of the 70S ribosome. The polypeptide is Large ribosomal subunit protein uL22 (Campylobacter curvus (strain 525.92)).